An 826-amino-acid polypeptide reads, in one-letter code: DNA mismatch repair protein MutS (826 aa).

Residue 622–629 (GPNMAGKS) coordinates ATP.

The protein belongs to the DNA mismatch repair MutS family.

Functionally, this protein is involved in the repair of mismatches in DNA. It is possible that it carries out the mismatch recognition step. This protein has a weak ATPase activity. The chain is DNA mismatch repair protein MutS from Chlamydia abortus (strain DSM 27085 / S26/3) (Chlamydophila abortus).